Consider the following 217-residue polypeptide: Very-long-chain (3R)-3-hydroxyacyl-CoA dehydratase PHS1 (217 aa).

At 1 to 11 (MSKKLASPLSF) the chain is on the cytoplasmic side. The helical transmembrane segment at 12–29 (LPLYNLLSAVGWSYLLYL) threads the bilayer. Over 30 to 47 (VISLYPKVGQPAFFYQTK) the chain is Lumenal. A helical membrane pass occupies residues 48-66 (NVATLVQCGAIIEIINSFL). Topologically, residues 67 to 76 (GVVRSPLLTT) are cytoplasmic. Residues 77 to 94 (VAQVSSRLLVVLGIFQLL) form a helical membrane-spanning segment. Residues 95–99 (PNTSG) lie on the Lumenal side of the membrane. Residues 100–117 (VQSVVYISLLLAWSITEI) form a helical membrane-spanning segment. Over 118–142 (VRYLYYFFMLVFKNGAPKILILLRY) the chain is Cytoplasmic. Residues 143–160 (NLFWILYPTGVASELRII) form a helical membrane-spanning segment. Catalysis depends on residues Tyr-149 and Glu-156. At 161 to 178 (YCALNAAESQYSLLYKRI) the chain is on the lumenal side. A helical transmembrane segment spans residues 179–196 (LIAAMLAYIPGFPMLFLH). Residues 197–217 (MVAQRKKVMKSLRSSFGKKLI) lie on the Cytoplasmic side of the membrane. An Endoplasmic reticulum retention signal motif is present at residues 214–217 (KKLI).

The protein belongs to the very long-chain fatty acids dehydratase HACD family.

Its subcellular location is the endoplasmic reticulum membrane. It localises to the vacuole membrane. The catalysed reaction is a very-long-chain (3R)-3-hydroxyacyl-CoA = a very-long-chain (2E)-enoyl-CoA + H2O. It catalyses the reaction (3R)-hydroxyeicosanoyl-CoA = (2E)-eicosenoyl-CoA + H2O. The enzyme catalyses (3R)-hydroxydocosanoyl-CoA = (2E)-docosenoyl-CoA + H2O. It carries out the reaction (3R)-hydroxyoctadecanoyl-CoA = (2E)-octadecenoyl-CoA + H2O. The catalysed reaction is (3R)-hydroxytetracosanoyl-CoA = (2E)-tetracosenoyl-CoA + H2O. It catalyses the reaction (3R)-hydroxyhexacosanoyl-CoA = (2E)-hexacosenoyl-CoA + H2O. The enzyme catalyses (3R)-hydroxyhexadecanoyl-CoA = (2E)-hexadecenoyl-CoA + H2O. The protein operates within lipid metabolism; fatty acid biosynthesis. In terms of biological role, catalyzes the third of the four reactions of the long-chain fatty acids elongation cycle. This endoplasmic reticulum-bound enzymatic process, allows the addition of two carbons to the chain of long- and very long-chain fatty acids/VLCFAs per cycle. This enzyme catalyzes the dehydration of the 3-hydroxyacyl-CoA intermediate into trans-2,3-enoyl-CoA, within each cycle of fatty acid elongation. Thereby, it participates in the production of VLCFAs of different chain lengths that are involved in multiple biological processes as precursors of membrane lipids and lipid mediators. This chain is Very-long-chain (3R)-3-hydroxyacyl-CoA dehydratase PHS1 (PHS1), found in Saccharomyces cerevisiae (strain ATCC 204508 / S288c) (Baker's yeast).